The chain runs to 87 residues: U14-lycotoxin-Ls1a (87 aa).

The first 20 residues, 1 to 20 (MNSKVFAVLLLLALSTCVLS), serve as a signal peptide directing secretion. The 46-residue stretch at 21 to 66 (EKYCPTPRNTSCKKMNIRNNCCRDSDCTSNAFCCAEPCGNFCHKAS) folds into the WAP domain. Disulfide bonds link Cys-24/Cys-54, Cys-32/Cys-58, Cys-41/Cys-53, Cys-42/Cys-80, and Cys-47/Cys-62.

The protein belongs to the venom protein 11 family. 01 (wap-1) subfamily. Post-translationally, contains 5 disulfide bonds. Expressed by the venom gland.

Its subcellular location is the secreted. Has antibacterial activity. This is U14-lycotoxin-Ls1a from Lycosa singoriensis (Wolf spider).